Reading from the N-terminus, the 318-residue chain is tRNA-cytidine(32) 2-sulfurtransferase (318 aa).

Residues 52–57 carry the PP-loop motif motif; the sequence is SGGKDS. 3 residues coordinate [4Fe-4S] cluster: C127, C130, and C218.

This sequence belongs to the TtcA family. As to quaternary structure, homodimer. Mg(2+) serves as cofactor. The cofactor is [4Fe-4S] cluster.

The protein localises to the cytoplasm. It carries out the reaction cytidine(32) in tRNA + S-sulfanyl-L-cysteinyl-[cysteine desulfurase] + AH2 + ATP = 2-thiocytidine(32) in tRNA + L-cysteinyl-[cysteine desulfurase] + A + AMP + diphosphate + H(+). The protein operates within tRNA modification. Functionally, catalyzes the ATP-dependent 2-thiolation of cytidine in position 32 of tRNA, to form 2-thiocytidine (s(2)C32). The sulfur atoms are provided by the cysteine/cysteine desulfurase (IscS) system. In Actinobacillus pleuropneumoniae serotype 7 (strain AP76), this protein is tRNA-cytidine(32) 2-sulfurtransferase.